Here is a 350-residue protein sequence, read N- to C-terminus: TATA box-binding protein-like 2 (350 aa).

The segment at 82-150 (ENRDQTVTGN…QPSPETPNSN (69 aa)) is disordered. Residues 94–116 (ASEESCRTRDRQSQLQLPDEHGS) show a composition bias toward basic and acidic residues. 2 stretches are compositionally biased toward polar residues: residues 118–128 (LNLNSNSSPDP) and 139–150 (SNQPSPETPNSN).

The protein belongs to the TBP family. As to quaternary structure, interacts with TAF3. Expressed in myotubes and myofibers (at protein level). Expressed in a wide variety of tissues with highest levels in heart, lung, liver, uterus and placenta and especially the gonads. Expression is higher in the ovary than the testis, and within the ovary expression is localized to the oocytes.

Its subcellular location is the cytoplasm. It localises to the nucleus. Functionally, transcription factor required in complex with TAF3 for the differentiation of myoblasts into myocytes. The complex replaces TFIID at specific promoters at an early stage in the differentiation process. The chain is TATA box-binding protein-like 2 from Mus musculus (Mouse).